We begin with the raw amino-acid sequence, 327 residues long: MTHSLRVIFAGTPEFAAAALAAIHEAGFPVPLVLTQPDRPAGRGMKLQASAVKRYAFERGMAVAQPPSLRRAGKYPAEAVAALDLLHATPHDVMVVAAYGLLLPQEVLELPRHGCINIHASLLPRWRGAAPIHRAIEAGDAETGVTLMQMDAGLDTGAMLHEARVAIAPDDTTATLHDKLAAAGARLVVDALVELERTGALAATPQPADGVTYAEKIGKHEAALDWRKPAAALARQVRAFDPFPGGAGTLDGATLKLWAADAVPGRDDAAPGTIVDIGPDGVVIACGEGALRVTQLQKPGGKRLPAREFLAGAPLAVGQRFAPADAA.

121-124 (SLLP) lines the (6S)-5,6,7,8-tetrahydrofolate pocket.

Belongs to the Fmt family.

It carries out the reaction L-methionyl-tRNA(fMet) + (6R)-10-formyltetrahydrofolate = N-formyl-L-methionyl-tRNA(fMet) + (6S)-5,6,7,8-tetrahydrofolate + H(+). Its function is as follows. Attaches a formyl group to the free amino group of methionyl-tRNA(fMet). The formyl group appears to play a dual role in the initiator identity of N-formylmethionyl-tRNA by promoting its recognition by IF2 and preventing the misappropriation of this tRNA by the elongation apparatus. This is Methionyl-tRNA formyltransferase from Burkholderia pseudomallei (strain 1710b).